We begin with the raw amino-acid sequence, 260 residues long: MKLGVNIDHVAVLREARKVNDPDILNALYVATQNGADQITIHLREDRRHIQDADAYAIMKYSNVGVNLECSINRAILDIVTDLKPHRTTLVPEKREEVTTEGGLDVVGHEDEIAYAIELLHDYLIPVSLFIDPTIEAVEKSKELGAEMVELHTGAFANLYAMLSSSLPHSNHSIKELELPRHELSIRLEKSILAIDEAAKHAKKIGLEVAAGHGLNYHNVHEMMKIAEITELNIGQSIVARSIFSGLGEAVKEMKRLTSR.

Position 6 (Asn6) interacts with 3-amino-2-oxopropyl phosphate. Residue 8-9 (DH) coordinates 1-deoxy-D-xylulose 5-phosphate. Arg17 contacts 3-amino-2-oxopropyl phosphate. His42 serves as the catalytic Proton acceptor. The 1-deoxy-D-xylulose 5-phosphate site is built by Arg44 and His49. Glu69 serves as the catalytic Proton acceptor. Thr99 is a binding site for 1-deoxy-D-xylulose 5-phosphate. His213 functions as the Proton donor in the catalytic mechanism. 3-amino-2-oxopropyl phosphate-binding positions include Gly214 and 235–236 (GQ).

This sequence belongs to the PNP synthase family. In terms of assembly, homooctamer; tetramer of dimers.

The protein resides in the cytoplasm. The enzyme catalyses 3-amino-2-oxopropyl phosphate + 1-deoxy-D-xylulose 5-phosphate = pyridoxine 5'-phosphate + phosphate + 2 H2O + H(+). It functions in the pathway cofactor biosynthesis; pyridoxine 5'-phosphate biosynthesis; pyridoxine 5'-phosphate from D-erythrose 4-phosphate: step 5/5. Functionally, catalyzes the complicated ring closure reaction between the two acyclic compounds 1-deoxy-D-xylulose-5-phosphate (DXP) and 3-amino-2-oxopropyl phosphate (1-amino-acetone-3-phosphate or AAP) to form pyridoxine 5'-phosphate (PNP) and inorganic phosphate. The protein is Pyridoxine 5'-phosphate synthase of Sulfurimonas denitrificans (strain ATCC 33889 / DSM 1251) (Thiomicrospira denitrificans (strain ATCC 33889 / DSM 1251)).